We begin with the raw amino-acid sequence, 124 residues long: Small ribosomal subunit protein uS12 (124 aa).

Residues M1–A23 are disordered. A 3-methylthioaspartic acid modification is found at D89. The segment at D103–G124 is disordered. Residues G113–G124 show a composition bias toward basic residues.

It belongs to the universal ribosomal protein uS12 family. As to quaternary structure, part of the 30S ribosomal subunit. Contacts proteins S8 and S17. May interact with IF1 in the 30S initiation complex.

With S4 and S5 plays an important role in translational accuracy. Functionally, interacts with and stabilizes bases of the 16S rRNA that are involved in tRNA selection in the A site and with the mRNA backbone. Located at the interface of the 30S and 50S subunits, it traverses the body of the 30S subunit contacting proteins on the other side and probably holding the rRNA structure together. The combined cluster of proteins S8, S12 and S17 appears to hold together the shoulder and platform of the 30S subunit. The protein is Small ribosomal subunit protein uS12 of Nitrosococcus oceani (strain ATCC 19707 / BCRC 17464 / JCM 30415 / NCIMB 11848 / C-107).